Here is a 232-residue protein sequence, read N- to C-terminus: Enolase-phosphatase E1 (232 aa).

Belongs to the HAD-like hydrolase superfamily. MasA/MtnC family. In terms of assembly, monomer. It depends on Mg(2+) as a cofactor.

The catalysed reaction is 5-methylsulfanyl-2,3-dioxopentyl phosphate + H2O = 1,2-dihydroxy-5-(methylsulfanyl)pent-1-en-3-one + phosphate. It participates in amino-acid biosynthesis; L-methionine biosynthesis via salvage pathway; L-methionine from S-methyl-5-thio-alpha-D-ribose 1-phosphate: step 3/6. Its pathway is amino-acid biosynthesis; L-methionine biosynthesis via salvage pathway; L-methionine from S-methyl-5-thio-alpha-D-ribose 1-phosphate: step 4/6. Bifunctional enzyme that catalyzes the enolization of 2,3-diketo-5-methylthiopentyl-1-phosphate (DK-MTP-1-P) into the intermediate 2-hydroxy-3-keto-5-methylthiopentenyl-1-phosphate (HK-MTPenyl-1-P), which is then dephosphorylated to form the acireductone 1,2-dihydroxy-3-keto-5-methylthiopentene (DHK-MTPene). In Xylella fastidiosa (strain 9a5c), this protein is Enolase-phosphatase E1.